Reading from the N-terminus, the 263-residue chain is 3-methyl-2-oxobutanoate hydroxymethyltransferase (263 aa).

Mg(2+) is bound by residues D45 and D84. Residues 45–46 (DS), D84, and K112 each bind 3-methyl-2-oxobutanoate. Position 114 (E114) interacts with Mg(2+). Catalysis depends on E180, which acts as the Proton acceptor.

Belongs to the PanB family. In terms of assembly, homodecamer; pentamer of dimers. Mg(2+) serves as cofactor.

It localises to the cytoplasm. The catalysed reaction is 3-methyl-2-oxobutanoate + (6R)-5,10-methylene-5,6,7,8-tetrahydrofolate + H2O = 2-dehydropantoate + (6S)-5,6,7,8-tetrahydrofolate. It functions in the pathway cofactor biosynthesis; (R)-pantothenate biosynthesis; (R)-pantoate from 3-methyl-2-oxobutanoate: step 1/2. Its function is as follows. Catalyzes the reversible reaction in which hydroxymethyl group from 5,10-methylenetetrahydrofolate is transferred onto alpha-ketoisovalerate to form ketopantoate. This chain is 3-methyl-2-oxobutanoate hydroxymethyltransferase, found in Salmonella enteritidis PT4 (strain P125109).